The chain runs to 371 residues: MSLEPFKQSEALTFGVELELQLVNRHDYDLAPFAPDLLRALKGAEHAGDIKPEISPSMIEISTGICHSYQQALEELTVMRDLMVAASRSLNLGIAGGGTHPFQQWSDRTISDSPRYQYISELYGYLAKQFTVFGQHVHIGCPSADESLFLLHAIGRYVPHFVALAASSPYVQGVDTGFASARLNSVAAFPMSGRAPFLLTWDAFTAYFEKMRNTGVIESMKDFYWDIRPKPEFGTIEVRVMDTPLTVQRACDIAAYIQMLARYLLLSRPFMPQEDDYLVYTFNRFQACRFGLEGEYVHPNELTRMPIADHILSICDALVPHAEALGSLPALANIRALAERRDGDAHWLRQVDAEARSQRETVRKACDQWAA.

Belongs to the glutamate--cysteine ligase type 2 family. YbdK subfamily.

It carries out the reaction L-cysteine + L-glutamate + ATP = gamma-L-glutamyl-L-cysteine + ADP + phosphate + H(+). Its function is as follows. ATP-dependent carboxylate-amine ligase which exhibits weak glutamate--cysteine ligase activity. The sequence is that of Putative glutamate--cysteine ligase 2 from Cupriavidus taiwanensis (strain DSM 17343 / BCRC 17206 / CCUG 44338 / CIP 107171 / LMG 19424 / R1) (Ralstonia taiwanensis (strain LMG 19424)).